The following is a 5386-amino-acid chain: Nonribosomal peptide synthetase 2 (5386 aa).

Positions 45–435 are adenylation 1; that stretch reads HDANAIDFLE…QGLLECLGRV (391 aa). The Carrier 1 domain maps to 544–617; it reads SPKDPIGHSV…DLIEVCRESK (74 aa). Ser578 is subject to O-(pantetheine 4'-phosphoryl)serine. The interval 652–1059 is condensation 1; that stretch reads LPCTPLQEAM…VDADRHVSAI (408 aa). Residues 1089 to 1482 are adenylation 2; sequence EKWAATDPHR…GRTDDQVKIR (394 aa). The 78-residue stretch at 1611–1688 folds into the Carrier 2 domain; the sequence is ELLSQWERDV…SLASLKKLQS (78 aa). Residue Ser1648 is modified to O-(pantetheine 4'-phosphoryl)serine. The condensation 2 stretch occupies residues 1731 to 2141; that stretch reads ILPCTPLQEA…ALSADTDMFP (411 aa). The adenylation 3 stretch occupies residues 2166-2551; that stretch reads FERTALLHPD…GRLDDQVKIR (386 aa). The 74-residue stretch at 2652–2725 folds into the Carrier 3 domain; it reads SKTESEVRNI…DLAEHLDQIS (74 aa). Position 2686 is an O-(pantetheine 4'-phosphoryl)serine (Ser2686). The segment at 2763-3174 is condensation 3; it reads RPCTPLQNGM…HSQIPLAKTD (412 aa). An adenylation 4 region spans residues 3202 to 3603; the sequence is EKTAQEHPQR…GRADDQVKLR (402 aa). In terms of domain architecture, Carrier 4 spans 3728-3805; that stretch reads EQWSKQEEKL…RLAKSLAANS (78 aa). Ser3765 bears the O-(pantetheine 4'-phosphoryl)serine mark. The interval 3846–4250 is condensation 4; sequence LAPCTPLQQG…LDQAINDPSA (405 aa). The Carrier 5 domain maps to 4281-4357; sequence FEWSDNAIAI…KMAQNMSMKN (77 aa). Ser4318 carries the O-(pantetheine 4'-phosphoryl)serine modification. The segment at 4391–4802 is condensation 5; sequence EEILPLTPLQ…ERAEAPVIDM (412 aa). A disordered region spans residues 4821–4842; the sequence is HTGSGHVESGEDDGQDTPSTET. One can recognise a Carrier 6 domain in the interval 4840-4913; sequence TETTNRIRKI…KMAKLADARA (74 aa). Residue Ser4874 is modified to O-(pantetheine 4'-phosphoryl)serine. Residues 4952–5257 are condensation 6; that stretch reads QMLPVTAGQL…VQAHLRHLND (306 aa).

The protein belongs to the NRP synthetase family.

Its pathway is siderophore biosynthesis. Nonribosomal peptide synthetase; part of the gene cluster that mediates the biosynthesis of hydroxamate-containing siderophores that play a critical role in virulence. Cochliobolus heterostrophus produces extracellular coprogen-type siderophores including coprogen, neocoprogen I and neocoprogen II, as well as the intracellular siderophore ferricrocin. The role of extracellular siderophores is to supply iron to the fungus during plant infection, and the intracellular ferricrocin is required for intracellular iron distribution and storage with a crucial role in ascus and ascospore development. SIDA2 catalyzes the conversion of L-ornithine to N(5)-hydroxyornithine, the first step in the biosynthesis of all hydroxamate-containing siderophores. The assembly of extracellular coprogen-type siderophores is then performed by the nonribosomal peptide synthetase (NRPS) NPS6 whereas the intracellular siderophore ferricrocin is assembled by NPS2. In Cochliobolus heterostrophus (strain C4 / ATCC 48331 / race T) (Southern corn leaf blight fungus), this protein is Nonribosomal peptide synthetase 2.